Consider the following 296-residue polypeptide: Chronophin (296 aa).

Residue Asp25 is the Nucleophile of the active site. 2 residues coordinate Mg(2+): Asp25 and Asn27. The active-site Proton donor is the Asn27. Residues 58 to 60 (SNN), His182, and Lys213 contribute to the substrate site. Asp238 serves as a coordination point for Mg(2+).

It belongs to the HAD-like hydrolase superfamily. In terms of assembly, homodimer. The cofactor is Mg(2+). As to expression, detected in brain (at protein level).

The protein resides in the cytoplasm. It is found in the cytosol. Its subcellular location is the cytoskeleton. It localises to the cell projection. The protein localises to the ruffle membrane. The protein resides in the lamellipodium membrane. It is found in the cell membrane. It carries out the reaction pyridoxal 5'-phosphate + H2O = pyridoxal + phosphate. The catalysed reaction is pyridoxine 5'-phosphate + H2O = pyridoxine + phosphate. The enzyme catalyses pyridoxamine + phosphate = pyridoxamine 5'-phosphate + H2O. It catalyses the reaction O-phospho-L-seryl-[protein] + H2O = L-seryl-[protein] + phosphate. Functions as a pyridoxal phosphate (PLP) phosphatase, which also catalyzes the dephosphorylation of pyridoxine 5'-phosphate (PNP) and pyridoxamine 5'-phosphate (PMP), with order of substrate preference PLP &gt; PNP &gt; PMP and therefore plays a role in vitamin B6 metabolism. Also functions as a protein serine phosphatase that specifically dephosphorylates 'Ser-3' in proteins of the actin-depolymerizing factor (ADF)/cofilin family like CFL1 and DSTN. Thereby, regulates cofilin-dependent actin cytoskeleton reorganization, being required for normal progress through mitosis and normal cytokinesis. Does not dephosphorylate phosphothreonines in LIMK1. Does not dephosphorylate peptides containing phosphotyrosine. The protein is Chronophin of Bos taurus (Bovine).